Reading from the N-terminus, the 264-residue chain is MFTFILLCLLVGALAGFLAGLFGIGGGLVIVPTLVYLLPIVDVPESLLMSTALGTSFATIVITGIGSAQRHHKLGNIVWQAVRILAPVIMLSVFICGLFIGRLDREISAKIFACLVVYLATKMVLSIKKDQVTTKSLTPLSSVIGGILIGMASSAAGIGGGGFIVPFLTARGINIKQAIGSSAFCGMLLGISGMFSFIVSGWGNPLMPEYSLGYIYLPAVLGITATSFFTSKLGASATAKLPVSTLKKGFALFLIVVAINMFLK.

Helical transmembrane passes span F4 to I24, L28 to L48, M49 to Q69, A81 to G101, I107 to I127, I147 to F167, A183 to G203, Y210 to T230, and V243 to L263.

The protein belongs to the 4-toluene sulfonate uptake permease (TSUP) (TC 2.A.102) family.

Its subcellular location is the cell membrane. In Haemophilus influenzae (strain ATCC 51907 / DSM 11121 / KW20 / Rd), this protein is Probable membrane transporter protein HI_0902.